A 478-amino-acid polypeptide reads, in one-letter code: Growth/differentiation factor 10 (478 aa).

The N-terminal stretch at 1–33 (MARGPARTSLGPGSQQLPLLSLLLLLLLRDADG) is a signal peptide. A disordered region spans residues 34–70 (SHTAAARPPPPAAADGLAGDKNPQRSPGDVAAAQSPG). The propeptide occupies 34-368 (SHTAAARPPP…EKTMQKARKK (335 aa)). Residues N118, N155, and N280 are each glycosylated (N-linked (GlcNAc...) asparagine). Residues 267–345 (PFQAGDPEPG…GRKDRRKKGQ (79 aa)) are disordered. Residues 291–301 (TQATGPLQNNE) show a composition bias toward polar residues. A compositionally biased stretch (basic residues) spans 331–343 (LKPRPGRKDRRKK). Disulfide bonds link C376–C443, C405–C475, and C409–C477. N469 carries N-linked (GlcNAc...) asparagine glycosylation.

This sequence belongs to the TGF-beta family. In terms of assembly, homodimer or heterodimer. Can form a non-covalent complex of the mature region and the pro-region.

The protein resides in the secreted. Growth factor involved in osteogenesis and adipogenesis. Plays an inhibitory role in the process of osteoblast differentiation via SMAD2/3 pathway. Plays an inhibitory role in the process of adipogenesis. The sequence is that of Growth/differentiation factor 10 (GDF10) from Bos taurus (Bovine).